Consider the following 124-residue polypeptide: uncharacterized protein (124 aa).

Its subcellular location is the plastid. The protein resides in the chloroplast. This is an uncharacterized protein from Chlamydomonas reinhardtii (Chlamydomonas smithii).